The chain runs to 119 residues: Phytosulfokines 2 (119 aa).

The N-terminal stretch at 1 to 34 (MSTTRGVSSSSAAAALALLLLFALCFFSFHFAAA) is a signal peptide. Residues 35 to 109 (ARAVPRDEHQ…RRLLSDAHLD (75 aa)) constitute a propeptide that is removed on maturation. 2 positions are modified to sulfotyrosine: Y110 and Y112. The propeptide occupies 115 to 119 (HKNKP).

Belongs to the phytosulfokine family. Post-translationally, sulfation is important for activity and for the binding to a putative membrane receptor. In terms of processing, PSK-alpha is produced by endopeptidase digestion. PSK-beta is produced from PSK-alpha by exopeptidase digestion.

The protein localises to the secreted. Functionally, promotes plant cell differentiation, organogenesis and somatic embryogenesis as well as cell proliferation. The polypeptide is Phytosulfokines 2 (PSK2) (Oryza sativa subsp. japonica (Rice)).